Reading from the N-terminus, the 127-residue chain is Holo-[acyl-carrier-protein] synthase (127 aa).

The Mg(2+) site is built by Asp8 and Glu57.

This sequence belongs to the P-Pant transferase superfamily. AcpS family. Requires Mg(2+) as cofactor.

It is found in the cytoplasm. The enzyme catalyses apo-[ACP] + CoA = holo-[ACP] + adenosine 3',5'-bisphosphate + H(+). Transfers the 4'-phosphopantetheine moiety from coenzyme A to a Ser of acyl-carrier-protein. The sequence is that of Holo-[acyl-carrier-protein] synthase from Hydrogenovibrio crunogenus (strain DSM 25203 / XCL-2) (Thiomicrospira crunogena).